The sequence spans 401 residues: Multidrug resistance protein MdtH (401 aa).

Transmembrane regions (helical) follow at residues 13 to 33, 34 to 54, 99 to 116, 139 to 159, 165 to 185, 214 to 234, 243 to 263, 277 to 297, 299 to 319, 340 to 360, and 368 to 388; these read YFLL…FPLI, SIRF…ALGL, PWIL…GTLF, LLMM…SWLL, FVCW…VWLL, VLTL…LPIV, AAVK…LYPI, LMFG…ITHL, TLFM…PARE, LGLA…YDTG, and LPWF…YWQF.

Belongs to the major facilitator superfamily. DHA1 family. MdtH (TC 2.A.1.2.21) subfamily.

It is found in the cell inner membrane. The protein is Multidrug resistance protein MdtH of Yersinia enterocolitica serotype O:8 / biotype 1B (strain NCTC 13174 / 8081).